Here is a 394-residue protein sequence, read N- to C-terminus: NAD(P)H-quinone oxidoreductase subunit H (394 aa).

It belongs to the complex I 49 kDa subunit family. As to quaternary structure, NDH-1 can be composed of about 15 different subunits; different subcomplexes with different compositions have been identified which probably have different functions.

It localises to the cellular thylakoid membrane. It carries out the reaction a plastoquinone + NADH + (n+1) H(+)(in) = a plastoquinol + NAD(+) + n H(+)(out). It catalyses the reaction a plastoquinone + NADPH + (n+1) H(+)(in) = a plastoquinol + NADP(+) + n H(+)(out). Its function is as follows. NDH-1 shuttles electrons from an unknown electron donor, via FMN and iron-sulfur (Fe-S) centers, to quinones in the respiratory and/or the photosynthetic chain. The immediate electron acceptor for the enzyme in this species is believed to be plastoquinone. Couples the redox reaction to proton translocation, and thus conserves the redox energy in a proton gradient. Cyanobacterial NDH-1 also plays a role in inorganic carbon-concentration. The polypeptide is NAD(P)H-quinone oxidoreductase subunit H (Trichodesmium erythraeum (strain IMS101)).